We begin with the raw amino-acid sequence, 97 residues long: MFAVIKTGGKQYRVEPGMLLKVEKLPADVGETVEIEASLIKDDQGNIKTEGKVEAEVVEHGKHKKVLVFHFKRKKNYKKLNGHRQPYTLIKIKDIKA.

The protein belongs to the bacterial ribosomal protein bL21 family. As to quaternary structure, part of the 50S ribosomal subunit. Contacts protein L20.

This protein binds to 23S rRNA in the presence of protein L20. The chain is Large ribosomal subunit protein bL21 from Persephonella marina (strain DSM 14350 / EX-H1).